Here is a 301-residue protein sequence, read N- to C-terminus: Leucine-rich repeat-containing protein 30 (301 aa).

LRR repeat units lie at residues 72 to 93, 95 to 116, 118 to 139, 141 to 163, 164 to 185, 187 to 208, 210 to 231, 233 to 254, and 265 to 287; these read EVQKLNLSHNQLRVLPPEVGKL, RIVVLNLCGNRLKSLPREVSLL, CLKVLFVNMNCLTEVPAELSLC, KLEVLSLSHNCLSQLPACFADLS, RLRKLNLSNNFFAHIPMCVFSL, ELIFLHVGSNRLENIAESIQHL, SLQIFIAEGNNIHSFPRSLCLV, SLELLNLNNNDIQTLPSELHLL, and MDKGLHISHNPLSKPLPELVEGG.

This Homo sapiens (Human) protein is Leucine-rich repeat-containing protein 30 (LRRC30).